A 376-amino-acid polypeptide reads, in one-letter code: Salivary hyaluronidase (376 aa).

An N-terminal signal peptide occupies residues 1–16; that stretch reads MNWIFHLFCAVYGIFC. 2 cysteine pairs are disulfide-bonded: C32–C328 and C203–C217. 4 N-linked (GlcNAc...) asparagine glycosylation sites follow: N36, N55, N77, and N88. Catalysis depends on E118, which acts as the Proton donor. Residues N143, N153, N181, N214, N226, N248, N287, N321, N336, N356, and N371 are each glycosylated (N-linked (GlcNAc...) asparagine).

The protein belongs to the glycosyl hydrolase 56 family. Glycosylated; glycosylation is critical for enzymatic activity. Female salivary gland (at protein level).

Its subcellular location is the secreted. The catalysed reaction is Random hydrolysis of (1-&gt;4)-linkages between N-acetyl-beta-D-glucosamine and D-glucuronate residues in hyaluronate.. Its function is as follows. Hydrolyzes high molecular weight hyaluronic acid to produce small oligosaccharides. Up-regulates expression of CSF2, CSF3, LIF, CXCL1, CXCL2 and CXCL8 in cultured human dermal microvascular endothelial cells. Promotes host neutrophil recruitment at the injection site. Functionally, (Microbial infection) Probably promotes Leishmania major infection in the host. This chain is Salivary hyaluronidase, found in Lutzomyia longipalpis (Sand fly).